Reading from the N-terminus, the 1297-residue chain is MRILRGSPALSEFRVNKLLELCREQDLPVTGIYAEFMHFADLTSELDAEALEKLEKLLTYGPTIEEHEPQGLLLLVTPRPGTISPWSSKATDIAQNCGLNAVKRLERGTAYYVESSSELSSVQIDIVKSIIHDRMMEAVFGDLEAAAALFSVAQPAPMTQVDILSGGRLALEEANVSLGLALAEDEIDYLVENFTKLGRNPNDIELMMFAQANSEHCRHKIFNADWTIDGVEQPKSLFKMIKNTFETTPDHVLSAYKDNAAVMTGSKVGRFFPDPETRQYNYHHEDAHILMKVETHNHPTAISPWPGASTGSGGEIRDEGATGIGGKPKAGLVGFTTSNLRIPGFEQPWETDFGKPGRIVNALDIMLEGPLGGAAFNNEFGRPNLLGYFRTYEEKVTSHAGEEVRGYHKPIMIAGGMGNIRDEHVQKKEIPVGASLIVLGGPAMNIGLGGGAASSMASGQSAEDLDFASVQRENPEMERRCQEVIDRCWQLGDNNPIAFIHDVGAGGISNALPELVNDGERGGKFQLRDVPNDEPGMSPLEIWCNESQERYVLAVAPENMAAFDAICKRERAPYAVVGVATEERHLTLEDAHFDNTPIDMPMDILLGKPPKMHREATTLKVDSPAMTRDGIELNEAVDRVLRLPTVAEKTFLITIGDRTVTGLVARDQMVGPWQVPVANCAVTAASYDTYHGEAMSMGERTPVALLDFGASARLAVGESLTNIAATDIGDIKRIKLSANWMSPAGHPGEDAGLYEAVKAVGEELCPALGLTIPVGKDSMSMKTKWNENGEEKEVTSPLSLIITAFARVEDVRKTITPQLRTDKGETSLVLVDLGNGKNRLGATALAQVYKQLGDKPADVDNAEQLKGFFDAMQALVRQDKLLAYHDKGDGGLLVTLAEMAFAGHCGVNANIAALGDDVLAALFNEELGAVVQVKNDELDSVLSTLAANGLEACSHVIGAIDASDNFVIRSGDVVVLERSRTDLRVIWAETTHKMQALRDNPACADQEFEAKKDNSDPGLNVSLSYEVNEDIAAPYIAKGAKPKMAILREQGVNSHVEMAAAFDRAGFEATDIHMSDILTGQAVLDEYHGLVACGGFSYGDVLGAGEGWAKSVLFNAQAREQFQAFFNRENTFSLGVCNGCQMLSNLKELIPGADLWPRFVRNESERFEARFSLVEVQKSDSVFFDGMAGSRMPIAVSHGEGRVEVRDAQHLAAIEASGTVAVRFVDNLGNPTQQYPNNPNGSPNAITGLTTKDGRVTIMMPHPERVFRTVANSWAPEGWGENGAWMRMFQNARKNLA.

ATP-binding positions include 307-318 (GASTGSGGEIRD) and A678. Residues E718, N722, and D886 each coordinate Mg(2+). The region spanning 1044–1297 (MAILREQGVN…MFQNARKNLA (254 aa)) is the Glutamine amidotransferase type-1 domain. The Nucleophile role is filled by C1137. Active-site residues include H1262 and E1264.

In the N-terminal section; belongs to the FGAMS family. Monomer.

Its subcellular location is the cytoplasm. It carries out the reaction N(2)-formyl-N(1)-(5-phospho-beta-D-ribosyl)glycinamide + L-glutamine + ATP + H2O = 2-formamido-N(1)-(5-O-phospho-beta-D-ribosyl)acetamidine + L-glutamate + ADP + phosphate + H(+). Its pathway is purine metabolism; IMP biosynthesis via de novo pathway; 5-amino-1-(5-phospho-D-ribosyl)imidazole from N(2)-formyl-N(1)-(5-phospho-D-ribosyl)glycinamide: step 1/2. Its function is as follows. Phosphoribosylformylglycinamidine synthase involved in the purines biosynthetic pathway. Catalyzes the ATP-dependent conversion of formylglycinamide ribonucleotide (FGAR) and glutamine to yield formylglycinamidine ribonucleotide (FGAM) and glutamate. This is Phosphoribosylformylglycinamidine synthase from Vibrio vulnificus (strain YJ016).